The following is a 422-amino-acid chain: Glycine amidinotransferase, mitochondrial (422 aa).

The N-terminal 37 residues, 1 to 37 (MLRVRCLRGGSRGAEAAHFIGSRLGRAFTGWVQRSLQ), are a transit peptide targeting the mitochondrion. Residues Asp253 and His302 contribute to the active site. The active-site Amidino-cysteine intermediate is Cys406. Residue Thr416 is modified to Phosphothreonine.

This sequence belongs to the amidinotransferase family. In terms of assembly, homodimer.

Its subcellular location is the mitochondrion inner membrane. The catalysed reaction is L-arginine + glycine = guanidinoacetate + L-ornithine. Its pathway is amine and polyamine biosynthesis; creatine biosynthesis; creatine from L-arginine and glycine: step 1/2. Its function is as follows. Catalyzes the biosynthesis of guanidinoacetate, the immediate precursor of creatine. Creatine plays a vital role in energy metabolism in muscle tissues. May play a role in embryonic and central nervous system development. The protein is Glycine amidinotransferase, mitochondrial of Gallus gallus (Chicken).